The primary structure comprises 234 residues: Endonuclease V (234 aa).

Mg(2+) contacts are provided by D36 and D104.

This sequence belongs to the endonuclease V family. It depends on Mg(2+) as a cofactor.

The protein localises to the cytoplasm. The catalysed reaction is Endonucleolytic cleavage at apurinic or apyrimidinic sites to products with a 5'-phosphate.. In terms of biological role, DNA repair enzyme involved in the repair of deaminated bases. Selectively cleaves double-stranded DNA at the second phosphodiester bond 3' to a deoxyinosine leaving behind the intact lesion on the nicked DNA. The sequence is that of Endonuclease V from Yersinia pestis.